We begin with the raw amino-acid sequence, 333 residues long: Fructose-1,6-bisphosphatase class 1 (333 aa).

Residues E92, D113, L115, and D116 each coordinate Mg(2+). Residues 116 to 119, N209, Y242, and K272 each bind substrate; that span reads DGSS. A Mg(2+)-binding site is contributed by E278.

The protein belongs to the FBPase class 1 family. Homotetramer. Mg(2+) serves as cofactor.

It localises to the cytoplasm. The catalysed reaction is beta-D-fructose 1,6-bisphosphate + H2O = beta-D-fructose 6-phosphate + phosphate. The protein operates within carbohydrate biosynthesis; Calvin cycle. This is Fructose-1,6-bisphosphatase class 1 from Chlorobium phaeobacteroides (strain BS1).